The sequence spans 91 residues: uncharacterized protein (91 aa).

A helical membrane pass occupies residues 12 to 34; sequence FAIVYANITFLFYYLLDFTLPFH.

Its subcellular location is the membrane. This is an uncharacterized protein from Saccharomyces cerevisiae (strain ATCC 204508 / S288c) (Baker's yeast).